We begin with the raw amino-acid sequence, 371 residues long: Protease PrtS (371 aa).

His169 is a binding site for Zn(2+). Residue Glu170 is part of the active site. Zn(2+)-binding residues include His173 and Glu193. The Proton donor role is filled by His273. Positions 352 to 371 (KEEDKDKGKDEGKDKAETKV) are disordered.

This sequence belongs to the peptidase M4 family. Requires Zn(2+) as cofactor.

The protein resides in the secreted. With respect to regulation, inhibited by 8 mM 1,10-phenanthroline, but not by EDTA or PMSF. Functionally, metalloprotease involved in the inhibition of insect antibacterial peptides. Reduces the antibacterial activity of G.mellonella hemolymph by 50%. Reduces the antibacterial activity of cecropin A by 80% and completely inhibits cecropin B. In Photorhabdus sp. (strain Az29), this protein is Protease PrtS.